The following is a 317-amino-acid chain: tRNA(Ile)-lysidine synthase (317 aa).

ATP is bound at residue 30-35 (SGGSDS).

The protein belongs to the tRNA(Ile)-lysidine synthase family.

Its subcellular location is the cytoplasm. The catalysed reaction is cytidine(34) in tRNA(Ile2) + L-lysine + ATP = lysidine(34) in tRNA(Ile2) + AMP + diphosphate + H(+). In terms of biological role, ligates lysine onto the cytidine present at position 34 of the AUA codon-specific tRNA(Ile) that contains the anticodon CAU, in an ATP-dependent manner. Cytidine is converted to lysidine, thus changing the amino acid specificity of the tRNA from methionine to isoleucine. The sequence is that of tRNA(Ile)-lysidine synthase from Chlamydia caviae (strain ATCC VR-813 / DSM 19441 / 03DC25 / GPIC) (Chlamydophila caviae).